A 154-amino-acid polypeptide reads, in one-letter code: Myoglobin (154 aa).

Positions 2-148 (GLSDGEWQLV…FRNDIAAKYK (147 aa)) constitute a Globin domain. Serine 4 bears the Phosphoserine mark. Position 65 (histidine 65) interacts with nitrite. O2 is bound at residue histidine 65. Phosphothreonine is present on threonine 68. Histidine 94 lines the heme b pocket.

It belongs to the globin family. In terms of assembly, monomeric.

The protein resides in the cytoplasm. The protein localises to the sarcoplasm. It catalyses the reaction Fe(III)-heme b-[protein] + nitric oxide + H2O = Fe(II)-heme b-[protein] + nitrite + 2 H(+). The catalysed reaction is H2O2 + AH2 = A + 2 H2O. In terms of biological role, monomeric heme protein which primary function is to store oxygen and facilitate its diffusion within muscle tissues. Reversibly binds oxygen through a pentacoordinated heme iron and enables its timely and efficient release as needed during periods of heightened demand. Depending on the oxidative conditions of tissues and cells, and in addition to its ability to bind oxygen, it also has a nitrite reductase activity whereby it regulates the production of bioactive nitric oxide. Under stress conditions, like hypoxia and anoxia, it also protects cells against reactive oxygen species thanks to its pseudoperoxidase activity. This is Myoglobin (MB) from Ondatra zibethicus (Muskrat).